The primary structure comprises 198 residues: MQLIGLTGGIASGKSTIASRLAELGAAVVDADRIAREVVEPGTPALAEIRRAFGDGVIAPDGTLDRPELGAIVFGDPAALRILNGITHPAVLRESTARFEAAAVADPDAIVVYDVPLLVESANRYPFDLVVVAHADAATRARRLFELRGMDPVAAERRIGSQVSDAERLSAADLVIDTGGTLEETYRQVDALWAGLRG.

A DPCK domain is found at 3–198; that stretch reads LIGLTGGIAS…VDALWAGLRG (196 aa). An ATP-binding site is contributed by 11–16; that stretch reads ASGKST.

It belongs to the CoaE family.

It localises to the cytoplasm. The catalysed reaction is 3'-dephospho-CoA + ATP = ADP + CoA + H(+). It participates in cofactor biosynthesis; coenzyme A biosynthesis; CoA from (R)-pantothenate: step 5/5. Functionally, catalyzes the phosphorylation of the 3'-hydroxyl group of dephosphocoenzyme A to form coenzyme A. The chain is Dephospho-CoA kinase from Leifsonia xyli subsp. xyli (strain CTCB07).